A 66-amino-acid chain; its full sequence is U1-theraphotoxin-Cg1a 1 (66 aa).

A signal peptide spans 1–21 (MKTSALFVIFGLVLLFCNSFA). The propeptide occupies 22–29 (AELKTTGR). Cystine bridges form between Cys31/Cys46, Cys38/Cys51, and Cys45/Cys58. The residue at position 63 (Pro63) is a Proline amide.

The protein belongs to the neurotoxin 10 (Hwtx-1) family. 46 (Jztx-7/10/12) subfamily. Expressed by the venom gland.

Its subcellular location is the secreted. Its function is as follows. Probable ion channel inhibitor. The protein is U1-theraphotoxin-Cg1a 1 of Chilobrachys guangxiensis (Chinese earth tiger tarantula).